Reading from the N-terminus, the 153-residue chain is Arginine regulator (153 aa).

The protein belongs to the ArgR family.

It is found in the cytoplasm. The protein operates within amino-acid degradation; L-arginine degradation via ADI pathway. Its function is as follows. Regulates the transcription of the arc operon, involved in arginine catabolism. The polypeptide is Arginine regulator (argR1) (Lactiplantibacillus plantarum (strain ATCC BAA-793 / NCIMB 8826 / WCFS1) (Lactobacillus plantarum)).